Reading from the N-terminus, the 339-residue chain is MRVYYDRDADINLIKGKKVVIVGYGSQGHAHALNLRDSGVKDIVIALRKGSASAKKAEAEGFKVMEVAEAAAQADVVMMLTPDELQGDIYRESLHGQMKQGAALLFAHGLNVHFNLIEPRKDLDVLMVAPKGPGHTVRSEYLRGGGVPTLIAIAQDASGNAHDLGLSYASANGGGRAGIIETTFKEECETDLFGEQVVLCGGLVELIKAGFETLVEAGYAPEMAYFECLHEVKLIVDLIYEGGIANMNYSISNTAEYGEYVTGPRIITPETKAEMKRVLTDIQSGTFTRNWMLENKVNQTSFKATRARNAAHPIEEVGERLRGMMPWIKEKALVDKTKN.

One can recognise a KARI N-terminal Rossmann domain in the interval 1–182; it reads MRVYYDRDAD…GGGRAGIIET (182 aa). Residues 24 to 27, arginine 48, serine 51, serine 53, and 83 to 86 contribute to the NADP(+) site; these read YGSQ and DELQ. Histidine 108 is an active-site residue. Glycine 134 provides a ligand contact to NADP(+). The KARI C-terminal knotted domain maps to 183 to 328; sequence TFKEECETDL…ERLRGMMPWI (146 aa). Positions 191, 195, 227, and 231 each coordinate Mg(2+). A substrate-binding site is contributed by serine 252.

The protein belongs to the ketol-acid reductoisomerase family. Requires Mg(2+) as cofactor.

The catalysed reaction is (2R)-2,3-dihydroxy-3-methylbutanoate + NADP(+) = (2S)-2-acetolactate + NADPH + H(+). It carries out the reaction (2R,3R)-2,3-dihydroxy-3-methylpentanoate + NADP(+) = (S)-2-ethyl-2-hydroxy-3-oxobutanoate + NADPH + H(+). Its pathway is amino-acid biosynthesis; L-isoleucine biosynthesis; L-isoleucine from 2-oxobutanoate: step 2/4. It participates in amino-acid biosynthesis; L-valine biosynthesis; L-valine from pyruvate: step 2/4. In terms of biological role, involved in the biosynthesis of branched-chain amino acids (BCAA). Catalyzes an alkyl-migration followed by a ketol-acid reduction of (S)-2-acetolactate (S2AL) to yield (R)-2,3-dihydroxy-isovalerate. In the isomerase reaction, S2AL is rearranged via a Mg-dependent methyl migration to produce 3-hydroxy-3-methyl-2-ketobutyrate (HMKB). In the reductase reaction, this 2-ketoacid undergoes a metal-dependent reduction by NADPH to yield (R)-2,3-dihydroxy-isovalerate. The chain is Ketol-acid reductoisomerase (NADP(+)) from Methylobacterium sp. (strain 4-46).